Here is a 243-residue protein sequence, read N- to C-terminus: Ribonuclease 3 (243 aa).

Positions 10–146 (VNRFRKRFDT…FIGALYLDQG (137 aa)) constitute an RNase III domain. Position 59 (Glu-59) interacts with Mg(2+). The active site involves Asp-63. Residues Asp-132 and Glu-135 each coordinate Mg(2+). Glu-135 is an active-site residue. In terms of domain architecture, DRBM spans 172–241 (DFKTQFQEYV…AKSAYKQLKQ (70 aa)). Basic and acidic residues predominate over residues 219-231 (GKGKTKKESEQRA). The interval 219 to 243 (GKGKTKKESEQRAAKSAYKQLKQIK) is disordered.

The protein belongs to the ribonuclease III family. Homodimer. Requires Mg(2+) as cofactor.

The protein resides in the cytoplasm. The catalysed reaction is Endonucleolytic cleavage to 5'-phosphomonoester.. Digests double-stranded RNA. Involved in the processing of primary rRNA transcript to yield the immediate precursors to the large and small rRNAs (23S and 16S). Processes some mRNAs, and tRNAs when they are encoded in the rRNA operon. Processes pre-crRNA and tracrRNA of type II CRISPR loci if present in the organism. In Staphylococcus aureus (strain Mu3 / ATCC 700698), this protein is Ribonuclease 3.